Reading from the N-terminus, the 108-residue chain is UPF0251 protein PF0620 (108 aa).

This sequence belongs to the UPF0251 family.

The chain is UPF0251 protein PF0620 from Pyrococcus furiosus (strain ATCC 43587 / DSM 3638 / JCM 8422 / Vc1).